The following is a 46-amino-acid chain: Protein krueppel (46 aa).

C2H2-type zinc fingers lie at residues 1-4 (MRLH), 10-32 (YQCL…LRVH), and 38-46 (YACEICPSR).

This sequence belongs to the krueppel C2H2-type zinc-finger protein family.

Its subcellular location is the nucleus. In terms of biological role, krueppel is a gap class segmentation protein. The sequence is that of Protein krueppel (Kr) from Pholcus phalangioides (Longbodied cellar spider).